Reading from the N-terminus, the 702-residue chain is Acetylcholinesterase (702 aa).

The N-terminal stretch at 1–36 is a signal peptide; the sequence is MEIRGLITRLLGPCHLRHLILCSLGLYSILVQSVHC. The tract at residues 107-134 is disordered; it reads HIHSTTTRRRGLTRRESSSDATDSDPLV. An N-linked (GlcNAc...) asparagine glycan is attached at asparagine 187. Cysteine 195 and cysteine 222 form a disulfide bridge. The Acyl-ester intermediate role is filled by serine 327. Cysteine 381 and cysteine 394 are disulfide-bonded. Catalysis depends on charge relay system residues glutamate 453 and histidine 567. Cysteine 529 and cysteine 650 are disulfide-bonded. Asparagine 637 carries N-linked (GlcNAc...) asparagine glycosylation.

The protein belongs to the type-B carboxylesterase/lipase family.

The protein localises to the synapse. The protein resides in the secreted. Its subcellular location is the cell membrane. It catalyses the reaction acetylcholine + H2O = choline + acetate + H(+). Functionally, rapidly hydrolyzes choline released into the synapse. This Culex pipiens (House mosquito) protein is Acetylcholinesterase (ACHE1).